A 220-amino-acid polypeptide reads, in one-letter code: Small ribosomal subunit protein eS1 (220 aa).

This sequence belongs to the eukaryotic ribosomal protein eS1 family.

In Pyrobaculum arsenaticum (strain DSM 13514 / JCM 11321 / PZ6), this protein is Small ribosomal subunit protein eS1.